We begin with the raw amino-acid sequence, 42 residues long: Photosystem I reaction center subunit IX (42 aa).

A helical membrane pass occupies residues Y7 to I27.

The protein belongs to the PsaJ family.

It localises to the plastid. It is found in the chloroplast thylakoid membrane. May help in the organization of the PsaE and PsaF subunits. In Atropa belladonna (Belladonna), this protein is Photosystem I reaction center subunit IX.